Consider the following 1906-residue polypeptide: DENN domain-containing protein 4C (1906 aa).

An MABP domain is found at 40–199 (KAPITDIAVI…NVFLCYKKSV (160 aa)). One can recognise a uDENN domain in the interval 191–363 (VFLCYKKSVP…NIPFPSPQRP (173 aa)). One can recognise a cDENN domain in the interval 384–520 (PLPLSGANFS…PCKSLLGTLR (137 aa)). Positions 522 to 640 (LYQQLCSVHR…CSFVSDKDTG (119 aa)) constitute a dDENN domain. Residues S702, S736, and S740 each carry the phosphoserine modification. The PPR repeat unit spans residues 818–852 (DEVCYRVVMQLCGLWVNPVLAVRVLFEMKTARIKP). Residues 904–917 (SQVFSISGGQSDQG) are compositionally biased toward polar residues. Disordered regions lie at residues 904–942 (SQVFSISGGQSDQGYGSKDELVKEGADGHAPEEHTPPEL) and 963–984 (LQPTPEPQSPTEPPAWGSSIVK). A compositionally biased stretch (basic and acidic residues) spans 920–939 (SKDELVKEGADGHAPEEHTP). T966 carries the phosphothreonine modification. Residues 966–975 (TPEPQSPTEP) are compositionally biased toward pro residues. A Phosphoserine modification is found at S971. Position 973 is a phosphothreonine (T973). A phosphoserine mark is found at S987, S1000, S1043, S1058, S1096, and S1123. A compositionally biased stretch (polar residues) spans 1154–1171 (NSLQSNSHSDQSRDTQAG). The segment at 1154–1184 (NSLQSNSHSDQSRDTQAGAQDPVNKRSSSYA) is disordered. S1181, S1221, S1240, S1248, and S1274 each carry phosphoserine. Residues 1246–1317 (SCSMELHGEG…PQSPYRAYKD (72 aa)) are disordered. Over residues 1281-1291 (PPARDSTETEK) the composition is skewed to basic and acidic residues. Residues 1292-1302 (SSPAVSSSKTL) are compositionally biased toward polar residues. S1321, S1333, and S1342 each carry phosphoserine. 3 disordered regions span residues 1410–1440 (SPNTSVSGLVPSELTQSNTSLGSSSSSGDVG), 1548–1577 (STSGDSLQSGSIPSASEPSEHKPTSSSAEP), and 1596–1628 (ASYTVESSDEIKKTNGDVQSVKMSSVPNSLSKR). The segment covering 1423–1437 (LTQSNTSLGSSSSSG) has biased composition (low complexity). Polar residues-rich tracts occupy residues 1548–1564 (STSGDSLQSGSIPSASE) and 1611–1628 (GDVQSVKMSSVPNSLSKR). Phosphoserine occurs at positions 1620, 1624, 1626, 1637, and 1796.

In terms of processing, phosphorylated in response to insulin.

The protein localises to the cytoplasmic vesicle membrane. It is found in the cell membrane. The protein resides in the cytoplasm. It localises to the cytosol. Guanine nucleotide exchange factor (GEF) activating RAB10. Promotes the exchange of GDP to GTP, converting inactive GDP-bound RAB10 into its active GTP-bound form. Thereby, stimulates SLC2A4/GLUT4 glucose transporter-enriched vesicles delivery to the plasma membrane in response to insulin. The polypeptide is DENN domain-containing protein 4C (Dennd4c) (Mus musculus (Mouse)).